Consider the following 378-residue polypeptide: S-adenosylmethionine synthase (378 aa).

H15 serves as a coordination point for ATP. D17 contributes to the Mg(2+) binding site. E43 contributes to the K(+) binding site. Residues E56 and Q99 each contribute to the L-methionine site. The flexible loop stretch occupies residues 99–109 (QSPDINQGINR). ATP contacts are provided by residues 164-166 (DAK), 230-231 (RF), D239, 245-246 (RK), A262, and K266. D239 contacts L-methionine. Residue K270 participates in L-methionine binding.

It belongs to the AdoMet synthase family. As to quaternary structure, homotetramer; dimer of dimers. It depends on Mg(2+) as a cofactor. Requires K(+) as cofactor.

It localises to the cytoplasm. It catalyses the reaction L-methionine + ATP + H2O = S-adenosyl-L-methionine + phosphate + diphosphate. The protein operates within amino-acid biosynthesis; S-adenosyl-L-methionine biosynthesis; S-adenosyl-L-methionine from L-methionine: step 1/1. Functionally, catalyzes the formation of S-adenosylmethionine (AdoMet) from methionine and ATP. The overall synthetic reaction is composed of two sequential steps, AdoMet formation and the subsequent tripolyphosphate hydrolysis which occurs prior to release of AdoMet from the enzyme. The polypeptide is S-adenosylmethionine synthase (Buchnera aphidicola subsp. Acyrthosiphon pisum (strain 5A)).